Here is a 250-residue protein sequence, read N- to C-terminus: 2,3-bisphosphoglycerate-dependent phosphoglycerate mutase (250 aa).

Residues 10–17 (RHGESQWN), 23–24 (TG), arginine 62, 89–92 (ERHY), lysine 100, 116–117 (RR), and 185–186 (GN) contribute to the substrate site. The active-site Tele-phosphohistidine intermediate is the histidine 11. Glutamate 89 functions as the Proton donor/acceptor in the catalytic mechanism.

It belongs to the phosphoglycerate mutase family. BPG-dependent PGAM subfamily. Homodimer.

It carries out the reaction (2R)-2-phosphoglycerate = (2R)-3-phosphoglycerate. It participates in carbohydrate degradation; glycolysis; pyruvate from D-glyceraldehyde 3-phosphate: step 3/5. Catalyzes the interconversion of 2-phosphoglycerate and 3-phosphoglycerate. This chain is 2,3-bisphosphoglycerate-dependent phosphoglycerate mutase, found in Citrobacter koseri (strain ATCC BAA-895 / CDC 4225-83 / SGSC4696).